The chain runs to 301 residues: GTPase Era (301 aa).

The region spanning 7–175 is the Era-type G domain; the sequence is YCGFIAIVGR…AAIVRKHLPE (169 aa). The interval 15–22 is G1; it reads GRPNVGKS. Residue 15–22 coordinates GTP; it reads GRPNVGKS. The G2 stretch occupies residues 41 to 45; the sequence is QTTRH. The interval 62-65 is G3; it reads DTPG. GTP contacts are provided by residues 62–66 and 124–127; these read DTPGL and NKVD. The interval 124-127 is G4; it reads NKVD. A G5 region spans residues 154-156; the sequence is ISA. Residues 206–283 enclose the KH type-2 domain; that stretch reads LGAELPYSVT…HLELWVKVKS (78 aa).

This sequence belongs to the TRAFAC class TrmE-Era-EngA-EngB-Septin-like GTPase superfamily. Era GTPase family. Monomer.

It is found in the cytoplasm. The protein localises to the cell inner membrane. Its function is as follows. An essential GTPase that binds both GDP and GTP, with rapid nucleotide exchange. Plays a role in 16S rRNA processing and 30S ribosomal subunit biogenesis and possibly also in cell cycle regulation and energy metabolism. This is GTPase Era from Escherichia coli O1:K1 / APEC.